The sequence spans 736 residues: Meiotic expression up-regulated protein 27 (736 aa).

This sequence belongs to the UPF0300 family.

The protein is Meiotic expression up-regulated protein 27 (meu27) of Schizosaccharomyces pombe (strain 972 / ATCC 24843) (Fission yeast).